A 130-amino-acid polypeptide reads, in one-letter code: Arsenical-resistance protein 2 (130 aa).

One can recognise a Rhodanese domain in the interval 17 to 124; the sequence is QRKDFQVVDL…WETHCRESNL (108 aa).

Functionally, involved in resistance to arsenic compounds. The sequence is that of Arsenical-resistance protein 2 (ARR2) from Saccharomyces cerevisiae (strain ATCC 204508 / S288c) (Baker's yeast).